The following is a 291-amino-acid chain: Pca regulon regulatory protein (291 aa).

Residues 1-22 (MSDETLVNDPVNPEPARPASAA) are disordered. One can recognise an HTH iclR-type domain in the interval 45-105 (MTSLARGLAV…SDGRTYSLLP (61 aa)). The segment at residues 67–86 (IAQISHRTEIPRAAVRRCLH) is a DNA-binding region (H-T-H motif). Residues 120–291 (LAISAQPYLD…SRDLCHQLFG (172 aa)) form the IclR-ED domain.

In terms of biological role, positive regulator of all genes within the pca regulon, pcaBDC, pcaIJ and pcaF. Also required for the chemotactic response to aromatic compounds. This Pseudomonas putida (Arthrobacter siderocapsulatus) protein is Pca regulon regulatory protein (pcaR).